Here is a 337-residue protein sequence, read N- to C-terminus: Transmembrane protein 120B (337 aa).

Residues 1–39 are a coiled coil; that stretch reads MSLERCQSEWTEIEQEYQQLQETHKVYRQKLEELTNLQA. 6 helical membrane-spanning segments follow: residues 100 to 122, 130 to 150, 157 to 175, 185 to 205, 268 to 288, and 300 to 320; these read GLYL…AKFA, FKLY…FLLN, IFNF…RESI, GWWV…LTWP, FLLP…VTLF, and QVFM…LTTL.

The protein belongs to the TMEM120 family.

Its subcellular location is the nucleus inner membrane. Functionally, necessary for efficient adipogenesis. Does not show ion channel activity. This is Transmembrane protein 120B (tmem120b) from Danio rerio (Zebrafish).